Consider the following 25-residue polypeptide: Zinc metalloproteinase-disintegrin-like daborhagin-M (25 aa).

In terms of domain architecture, Peptidase M12B spans 14–25; the sequence is SYVELIITVDHS. Residue Glu-17 participates in Ca(2+) binding.

Belongs to the venom metalloproteinase (M12B) family. P-III subfamily. P-IIIa sub-subfamily. In terms of assembly, monomer. Zn(2+) serves as cofactor. Post-translationally, N-glycosylated. Contains 16 disulfide bonds. Expressed by the venom gland.

It is found in the secreted. Its activity is regulated as follows. Inhibited by EDTA, EGTA and 1,10-phenanthroline. Addition of Mg(2+) or Ca(2+) increases the casein hydrolysis rate. Its function is as follows. Snake venom zinc metalloprotease that possesses high hemorrhagic activity (minimum hemorrhagic dose, MHD=0.86 ug) when subcutaneously injected into mice. Has potent fibrinogenolytic activity on alpha-chain of fibrinogen (FGA). Hydrolyzes model substrate (beta-chain of insulin) at Ala(14)-Leu(15) and Tyr(16)-Leu(17) followed by His(10)-Leu(11) and Phe(24)-Phe(25). This chain is Zinc metalloproteinase-disintegrin-like daborhagin-M, found in Daboia siamensis (Eastern Russel's viper).